A 634-amino-acid chain; its full sequence is Nucleoside triphosphatase I (634 aa).

In terms of domain architecture, Helicase ATP-binding spans 41–203 (FLGLDSMNSL…ALLVNLLRPG (163 aa)). Residue 54–61 (QETGVGKT) participates in ATP binding. Positions 140–143 (DECH) match the DEXH box motif. The Helicase C-terminal domain occupies 355–531 (SLYQALYEHS…EFSQLYRVLK (177 aa)). The binding to the cap-specific mRNA (nucleoside-2'-O-)-methyltransferase stretch occupies residues 456 to 523 (DIFILDMTWN…EIIQNKAREF (68 aa)).

Belongs to the helicase family. NPH I subfamily. In terms of assembly, monomer. Interacts (via C-terminus) with RAP94 (via N-terminus). Interacts with the cap-specific mRNA (nucleoside-2'-O-)-methyltransferase.

It is found in the virion. The enzyme catalyses a ribonucleoside 5'-triphosphate + H2O = a ribonucleoside 5'-diphosphate + phosphate + H(+). In terms of biological role, DNA-dependent ATPase required for providing the needed energy to achieve the termination of early transcripts. Acts in concert with the RAP94 subunit of the virion RNA polymerase and the capping enzyme/VTF to catalyze release of UUUUUNU-containing nascent RNA from the elongation complex. NPH-I must bind ssDNA in order to exhibit ATPase activity. This is Nucleoside triphosphatase I (NPH1) from Homo sapiens (Human).